A 505-amino-acid chain; its full sequence is Glutamyl-tRNA(Gln) amidotransferase subunit A (505 aa).

Catalysis depends on charge relay system residues Lys-80 and Ser-155. The active-site Acyl-ester intermediate is the Ser-179.

Belongs to the amidase family. GatA subfamily. As to quaternary structure, heterotrimer of A, B and C subunits.

It catalyses the reaction L-glutamyl-tRNA(Gln) + L-glutamine + ATP + H2O = L-glutaminyl-tRNA(Gln) + L-glutamate + ADP + phosphate + H(+). In terms of biological role, allows the formation of correctly charged Gln-tRNA(Gln) through the transamidation of misacylated Glu-tRNA(Gln) in organisms which lack glutaminyl-tRNA synthetase. The reaction takes place in the presence of glutamine and ATP through an activated gamma-phospho-Glu-tRNA(Gln). In Acidothermus cellulolyticus (strain ATCC 43068 / DSM 8971 / 11B), this protein is Glutamyl-tRNA(Gln) amidotransferase subunit A.